The sequence spans 503 residues: Aromatase (503 aa).

A run of 2 helical transmembrane segments spans residues 19-39 (EVVPIASIAILLLTGFLLLVW) and 53-73 (FLGIGPLISHCRFLWMGIGSA). Residues D309 and M374 each contribute to the substrate site. C437 lines the heme pocket.

This sequence belongs to the cytochrome P450 family. The cofactor is heme.

Its subcellular location is the endoplasmic reticulum membrane. It localises to the microsome membrane. It carries out the reaction testosterone + 3 reduced [NADPH--hemoprotein reductase] + 3 O2 = 17beta-estradiol + formate + 3 oxidized [NADPH--hemoprotein reductase] + 4 H2O + 4 H(+). The enzyme catalyses androst-4-ene-3,17-dione + 3 reduced [NADPH--hemoprotein reductase] + 3 O2 = estrone + formate + 3 oxidized [NADPH--hemoprotein reductase] + 4 H2O + 4 H(+). It catalyses the reaction androst-4-ene-3,17-dione + reduced [NADPH--hemoprotein reductase] + O2 = 19-hydroxyandrost-4-ene-3,17-dione + oxidized [NADPH--hemoprotein reductase] + H2O + H(+). The catalysed reaction is 19-hydroxyandrost-4-ene-3,17-dione + reduced [NADPH--hemoprotein reductase] + O2 = 19-oxo-androst-4-ene-3,17-dione + oxidized [NADPH--hemoprotein reductase] + 2 H2O + H(+). It carries out the reaction 19-oxo-androst-4-ene-3,17-dione + reduced [NADPH--hemoprotein reductase] + O2 = estrone + formate + oxidized [NADPH--hemoprotein reductase] + H2O + 2 H(+). The enzyme catalyses estrone + reduced [NADPH--hemoprotein reductase] + O2 = 2-hydroxyestrone + oxidized [NADPH--hemoprotein reductase] + H2O + H(+). It catalyses the reaction 17beta-hydroxy-5alpha-androstan-3-one + reduced [NADPH--hemoprotein reductase] + O2 = 17beta,19-dihydroxy-3-oxo-5alpha-androstanone + oxidized [NADPH--hemoprotein reductase] + H2O + H(+). The catalysed reaction is 17beta,19-dihydroxy-3-oxo-5alpha-androstanone + reduced [NADPH--hemoprotein reductase] + O2 = 17beta-hydroxy-3,19-dioxo-5alpha-androstanone + oxidized [NADPH--hemoprotein reductase] + 2 H2O + H(+). It carries out the reaction 17beta-hydroxy-3,19-dioxo-5alpha-androstanone + reduced [NADPH--hemoprotein reductase] + O2 = 17beta-hydroxy-3-oxo-19-nor-5alpha-androst-1-ene + formate + oxidized [NADPH--hemoprotein reductase] + H2O + 2 H(+). It participates in steroid hormone biosynthesis. In terms of biological role, a cytochrome P450 monooxygenase that catalyzes the conversion of C19 androgens, androst-4-ene-3,17-dione (androstenedione) and testosterone to the C18 estrogens, estrone and estradiol, respectively. Catalyzes three successive oxidations of C19 androgens: two conventional oxidations at C19 yielding 19-hydroxy and 19-oxo/19-aldehyde derivatives, followed by a third oxidative aromatization step that involves C1-beta hydrogen abstraction combined with cleavage of the C10-C19 bond to yield a phenolic A ring and formic acid. Alternatively, the third oxidative reaction yields a 19-norsteroid and formic acid. Converts dihydrotestosterone to delta1,10-dehydro 19-nordihydrotestosterone and may play a role in homeostasis of this potent androgen. Also displays 2-hydroxylase activity toward estrone. Mechanistically, uses molecular oxygen inserting one oxygen atom into a substrate, and reducing the second into a water molecule, with two electrons provided by NADPH via cytochrome P450 reductase (CPR; NADPH-ferrihemoprotein reductase). This Bos taurus (Bovine) protein is Aromatase (CYP19A1).